The chain runs to 414 residues: Dihydroorotase (414 aa).

2 residues coordinate Zn(2+): His-56 and His-58. Substrate is bound by residues 58 to 60 and Asn-90; that span reads HFR. Residues Lys-138, His-171, His-219, and Asp-280 each coordinate Zn(2+). Lys-138 carries the post-translational modification N6-carboxylysine. Asp-280 is a catalytic residue. Residue His-284 participates in substrate binding.

Belongs to the metallo-dependent hydrolases superfamily. DHOase family. Class I DHOase subfamily. Zn(2+) serves as cofactor.

The enzyme catalyses (S)-dihydroorotate + H2O = N-carbamoyl-L-aspartate + H(+). Its pathway is pyrimidine metabolism; UMP biosynthesis via de novo pathway; (S)-dihydroorotate from bicarbonate: step 3/3. Functionally, catalyzes the reversible cyclization of carbamoyl aspartate to dihydroorotate. The polypeptide is Dihydroorotase (Thermoplasma acidophilum (strain ATCC 25905 / DSM 1728 / JCM 9062 / NBRC 15155 / AMRC-C165)).